A 410-amino-acid chain; its full sequence is Lysosome-associated membrane glycoprotein 2 (410 aa).

The N-terminal stretch at 1 to 28 is a signal peptide; it reads MVCFRLFPVPGSGLVLVCLVLGAVRSYA. The segment at 29-192 is first lumenal domain; that stretch reads LELNLTDSEN…STNEFLCDKD (164 aa). Topologically, residues 29–375 are lumenal; sequence LELNLTDSEN…QDCSADDDNF (347 aa). 2 N-linked (GlcNAc...) (polylactosaminoglycan) asparagine glycosylation sites follow: Asn-32 and Asn-38. A disulfide bridge links Cys-41 with Cys-79. Residues Asn-49, Asn-58, Asn-75, Asn-101, Asn-123, and Asn-179 are each glycosylated (N-linked (GlcNAc...) asparagine). The cysteines at positions 153 and 189 are disulfide-linked. Residues 193–228 are hinge; the sequence is KTSTVAPTIHTTVPSPTTTPTPKEKPEAGTYSVNNG. The O-linked (GalNAc...) serine glycan is linked to Ser-195. 4 O-linked (GalNAc...) threonine glycosylation sites follow: Thr-196, Thr-200, Thr-203, and Thr-204. The segment covering 199–213 has biased composition (low complexity); that stretch reads PTIHTTVPSPTTTPT. The tract at residues 199–221 is disordered; it reads PTIHTTVPSPTTTPTPKEKPEAG. A glycan (O-linked (GalNAc...) serine; partial) is linked at Ser-207. An O-linked (GalNAc...) threonine; partial glycan is attached at Thr-209. Residues Thr-210 and Thr-211 are each glycosylated (O-linked (GalNAc...) threonine). Thr-213 carries O-linked (GalNAc...) threonine; partial glycosylation. N-linked (GlcNAc...) asparagine glycosylation is found at Asn-229, Asn-242, Asn-257, Asn-275, and Asn-300. The interval 229 to 375 is second lumenal domain; the sequence is NDTCLLATMG…QDCSADDDNF (147 aa). Cys-232 and Cys-265 are disulfide-bonded. Asn-307 is a glycosylation site (N-linked (GlcNAc...) (polylactosaminoglycan) asparagine). 2 N-linked (GlcNAc...) asparagine glycosylation sites follow: Asn-317 and Asn-356. The cysteines at positions 331 and 368 are disulfide-linked. The chain crosses the membrane as a helical span at residues 376–399; it reads LVPIAVGAALAGVLILVLLAYFIG. The Cytoplasmic portion of the chain corresponds to 400–410; the sequence is LKHHHAGYEQF. The tract at residues 401–404 is important for binding and subsequent lysosomal degradation of target proteins; sequence KHHH.

Belongs to the LAMP family. Monomer. Homodimer. Homotrimer. Forms large homooligomers. Interacts (via its cytoplasmic region) with HSPA8; HSPA8 mediates recruitment of proteins with a KFERQ motif to the surface of the lysosome for chaperone-mediated autophagy. Interacts with HSP90 in the lysosome lumen; this enhances LAMP2 stability. Interacts with MLLT11. Interacts with ABCB9. Interacts with FURIN. Interacts with CT55; this interaction may be important for LAMP2 protein stability. Interacts with TMEM175; inhibiting the proton channel activity of TMEM175. Forms a ternary complex with RAB7A and RUFY4 (via RUN domain); the interaction with RAB7A is mediated by RUFY4 (via RUN and coiled coil domains). As to quaternary structure, (Microbial infection) Interacts with mumps virus protein F; this interaction promotes protein F cleavage by FURIN. O- and N-glycosylated; some of the 16 N-linked glycans are polylactosaminoglycans. In terms of tissue distribution, isoform LAMP-2A is highly expressed in placenta, lung and liver, less in kidney and pancreas, low in brain and skeletal muscle. Isoform LAMP-2B is detected in spleen, thymus, prostate, testis, small intestine, colon, skeletal muscle, brain, placenta, lung, kidney, ovary and pancreas and liver. Isoform LAMP-2C is detected in small intestine, colon, heart, brain, skeletal muscle, and at lower levels in kidney and placenta.

The protein resides in the lysosome membrane. It localises to the endosome membrane. Its subcellular location is the cell membrane. The protein localises to the cytoplasmic vesicle. It is found in the autophagosome membrane. Lysosomal membrane glycoprotein which plays an important role in lysosome biogenesis, lysosomal pH regulation and autophagy. Acts as an important regulator of lysosomal lumen pH regulation by acting as a direct inhibitor of the proton channel TMEM175, facilitating lysosomal acidification for optimal hydrolase activity. Plays an important role in chaperone-mediated autophagy, a process that mediates lysosomal degradation of proteins in response to various stresses and as part of the normal turnover of proteins with a long biological half-live. Functions by binding target proteins, such as GAPDH, NLRP3 and MLLT11, and targeting them for lysosomal degradation. In the chaperone-mediated autophagy, acts downstream of chaperones, such as HSPA8/HSC70, which recognize and bind substrate proteins and mediate their recruitment to lysosomes, where target proteins bind LAMP2. Plays a role in lysosomal protein degradation in response to starvation. Required for the fusion of autophagosomes with lysosomes during autophagy. Cells that lack LAMP2 express normal levels of VAMP8, but fail to accumulate STX17 on autophagosomes, which is the most likely explanation for the lack of fusion between autophagosomes and lysosomes. Required for normal degradation of the contents of autophagosomes. Required for efficient MHC class II-mediated presentation of exogenous antigens via its function in lysosomal protein degradation; antigenic peptides generated by proteases in the endosomal/lysosomal compartment are captured by nascent MHC II subunits. Is not required for efficient MHC class II-mediated presentation of endogenous antigens. Functionally, modulates chaperone-mediated autophagy. Decreases presentation of endogenous antigens by MHCII. Does not play a role in the presentation of exogenous and membrane-derived antigens by MHCII. Its function is as follows. (Microbial infection) Supports the FURIN-mediated cleavage of mumps virus fusion protein F by interacting with both FURIN and the unprocessed form but not the processed form of the viral protein F. The protein is Lysosome-associated membrane glycoprotein 2 (LAMP2) of Homo sapiens (Human).